The sequence spans 133 residues: MNINGPGVYHLNRDKIVYKAVYCRKNVLTGKKSEWFKSVATLRIKKDTXIVVPQTLSSRHTGLMRTDEAQVESVEDLNEVEIDTDEYECKSSGIKGPHIPIGFDENGIMYGLGIYSAHQQIALHKLQQRDSQL.

The protein belongs to the mimivirus L87/L94 family.

This is an uncharacterized protein from Acanthamoeba polyphaga mimivirus (APMV).